The following is a 213-amino-acid chain: Orotate phosphoribosyltransferase (213 aa).

Lys-26 contributes to the 5-phospho-alpha-D-ribose 1-diphosphate binding site. An orotate-binding site is contributed by 34-35; sequence FF. 5-phospho-alpha-D-ribose 1-diphosphate contacts are provided by residues 72–73, Arg-99, Lys-100, Lys-103, His-105, and 124–132; these read YK and DDVITAGTA. Orotate-binding residues include Thr-128 and Arg-156.

The protein belongs to the purine/pyrimidine phosphoribosyltransferase family. PyrE subfamily. As to quaternary structure, homodimer. The cofactor is Mg(2+).

The catalysed reaction is orotidine 5'-phosphate + diphosphate = orotate + 5-phospho-alpha-D-ribose 1-diphosphate. It functions in the pathway pyrimidine metabolism; UMP biosynthesis via de novo pathway; UMP from orotate: step 1/2. In terms of biological role, catalyzes the transfer of a ribosyl phosphate group from 5-phosphoribose 1-diphosphate to orotate, leading to the formation of orotidine monophosphate (OMP). The protein is Orotate phosphoribosyltransferase of Salmonella arizonae (strain ATCC BAA-731 / CDC346-86 / RSK2980).